Reading from the N-terminus, the 485-residue chain is Trigger factor (485 aa).

Positions 171-256 constitute a PPIase FKBP-type domain; the sequence is GDRVVIDFVG…VKAVKAPGEA (86 aa). The disordered stretch occupies residues 443–485; it reads FADDEDEAAEAAAPASEAGASKGVISEGVISEGSAPSHETGAA. Low complexity predominate over residues 452 to 462; the sequence is EAAAPASEAGA.

This sequence belongs to the FKBP-type PPIase family. Tig subfamily.

Its subcellular location is the cytoplasm. The enzyme catalyses [protein]-peptidylproline (omega=180) = [protein]-peptidylproline (omega=0). Its function is as follows. Involved in protein export. Acts as a chaperone by maintaining the newly synthesized protein in an open conformation. Functions as a peptidyl-prolyl cis-trans isomerase. This chain is Trigger factor, found in Methylobacterium sp. (strain 4-46).